The primary structure comprises 43 residues: Protein PsbN (43 aa).

Residues 5-27 form a helical membrane-spanning segment; the sequence is TLVAISISRLLVSFTGYALYTAF.

Belongs to the PsbN family.

The protein localises to the plastid. It is found in the chloroplast thylakoid membrane. In terms of biological role, may play a role in photosystem I and II biogenesis. The chain is Protein PsbN from Cycas taitungensis (Prince sago).